An 87-amino-acid polypeptide reads, in one-letter code: UPF0250 protein ECA1299 (87 aa).

The protein belongs to the UPF0250 family.

The sequence is that of UPF0250 protein ECA1299 from Pectobacterium atrosepticum (strain SCRI 1043 / ATCC BAA-672) (Erwinia carotovora subsp. atroseptica).